Consider the following 116-residue polypeptide: Iron-sulfur cluster insertion protein ErpA (116 aa).

C44, C108, and C110 together coordinate iron-sulfur cluster.

Belongs to the HesB/IscA family. In terms of assembly, homodimer. Requires iron-sulfur cluster as cofactor.

Its function is as follows. Required for insertion of 4Fe-4S clusters for at least IspG. The chain is Iron-sulfur cluster insertion protein ErpA from Shewanella halifaxensis (strain HAW-EB4).